We begin with the raw amino-acid sequence, 387 residues long: Patatin-11 (387 aa).

A signal peptide spans 1–23 (MATTKSVLVLIFMILATTSSTFA). Residues 32 to 230 (LSTDGGGIKG…TVGDPALLSL (199 aa)) form the PNPLA domain. Residues 36–41 (GGGIKG) carry the GXGXXG motif. Positions 75 to 79 (GTSTG) match the GXSXG motif. Residue Ser-77 is the Nucleophile of the active site. N-linked (GlcNAc...) asparagine glycosylation occurs at Asn-115. Asp-216 functions as the Proton acceptor in the catalytic mechanism. The DGA/G signature appears at 216-218 (DGG). Residues 322 to 385 (ENALNGTTTE…DRKKLRANKA (64 aa)) are a coiled coil. An N-linked (GlcNAc...) asparagine glycan is attached at Asn-326.

The protein belongs to the patatin family. Tuber.

It localises to the vacuole. In terms of biological role, probable lipolytic acyl hydrolase (LAH), an activity which is thought to be involved in the response of tubers to pathogens. This chain is Patatin-11, found in Solanum tuberosum (Potato).